The primary structure comprises 201 residues: Recombination protein RecR (201 aa).

The segment at 60-75 (CETCGNIDTRSPCTIC) adopts a C4-type zinc-finger fold. Residues 83 to 178 (SIIVVVADVA…KVTRLAHGVP (96 aa)) form the Toprim domain.

Belongs to the RecR family.

Functionally, may play a role in DNA repair. It seems to be involved in an RecBC-independent recombinational process of DNA repair. It may act with RecF and RecO. This chain is Recombination protein RecR, found in Nitrobacter winogradskyi (strain ATCC 25391 / DSM 10237 / CIP 104748 / NCIMB 11846 / Nb-255).